The following is a 128-amino-acid chain: MRSIKPLRCCNAHGRHVSQEYGRCTLLLFREKLFLQTGLVCNKQCNAPNNDGAESKHHGIHHGSRGALALRGAGVHLLASAALGPRVLAGLVPTGRSVQGSVGQCGRVAQIGRARDVAARKQESYCEK.

This is an uncharacterized protein from Frog virus 3 (isolate Goorha) (FV-3).